The sequence spans 343 residues: Low conductance mechanosensitive channel YnaI (343 aa).

Residues 1-9 (MIAELFTNN) are Periplasmic-facing. Residues 10–30 (ALNLVIIFGSCAALILMSFWF) form a helical membrane-spanning segment. The Cytoplasmic portion of the chain corresponds to 31-40 (RRGNRKRKGF). The chain crosses the membrane as a helical span at residues 41-61 (LFHAVQFLIYTIIISAVGSII). Topologically, residues 62–77 (NYVIENYKLKFITPGV) are periplasmic. The chain crosses the membrane as a helical span at residues 78-98 (IDFICTSLIAVILTIKLFLLI). The Cytoplasmic segment spans residues 99 to 125 (NQFEKQQIKKGRDITSARIMSRIIKIT). The chain crosses the membrane as a helical span at residues 126–146 (IIVVLVLLYGEHFGMSLSGLL). A topological domain (periplasmic) is located at residue threonine 147. The helical transmembrane segment at 148–168 (FGGIGGLAVGMAGKDILSNFF) threads the bilayer. Topologically, residues 169-343 (SGIMLYFDRP…DNITPPEQGR (175 aa)) are cytoplasmic.

This sequence belongs to the MscS (TC 1.A.23) family. In terms of assembly, homoheptamer.

It localises to the cell inner membrane. Its function is as follows. Mechanosensitive channel that protects cells against hypoosmotic stress when highly overexpressed. This Escherichia coli (strain K12) protein is Low conductance mechanosensitive channel YnaI (ynaI).